A 248-amino-acid chain; its full sequence is MKTLILLIQFFTRIPLPIQINMDEINLKKGSALLPFVGVIIGAWNWLIFTLVALVMPLPVAIIAGLFAEVIITGGFHVDALADTADGLFSSRKRERMLEIMKDSRVGANGVIAICFYFLFYGALFLSVTDTQQICWLFFVLPIVAKGVTMLLFAKMTYAGSKEGLGSIFLGVPWWPIVIAQVIVLAVLGLFFSYVGVIAYVGVILFTIIYRAFVYKRIGGMNGDTLGAGGQMGQLICLFCLVLLWGLV.

A run of 7 helical transmembrane segments spans residues 24-44, 70-90, 106-126, 134-154, 168-188, 189-209, and 228-248; these read EINL…IGAW, VIIT…GLFS, VGAN…ALFL, ICWL…LLFA, IFLG…LAVL, GLFF…FTII, and AGGQ…WGLV.

Belongs to the CobS family. Requires Mg(2+) as cofactor.

It is found in the cell membrane. The enzyme catalyses alpha-ribazole + adenosylcob(III)inamide-GDP = adenosylcob(III)alamin + GMP + H(+). It catalyses the reaction alpha-ribazole 5'-phosphate + adenosylcob(III)inamide-GDP = adenosylcob(III)alamin 5'-phosphate + GMP + H(+). It participates in cofactor biosynthesis; adenosylcobalamin biosynthesis; adenosylcobalamin from cob(II)yrinate a,c-diamide: step 7/7. Joins adenosylcobinamide-GDP and alpha-ribazole to generate adenosylcobalamin (Ado-cobalamin). Also synthesizes adenosylcobalamin 5'-phosphate from adenosylcobinamide-GDP and alpha-ribazole 5'-phosphate. The protein is Adenosylcobinamide-GDP ribazoletransferase of Listeria monocytogenes serovar 1/2a (strain ATCC BAA-679 / EGD-e).